The following is an 834-amino-acid chain: Protein EFR3 homolog cmp44E (834 aa).

Residues 120–156 (NLFVESFLRMVQKLLEDSNPNLKIMATNSFVKFANIN) form an HEAT repeat. Residues 595–612 (LHAISIGLLVLISRVSGI) traverse the membrane as a helical segment.

It belongs to the EFR3 family. As to expression, expression during embryogenesis is ubiquitous with notably higher levels in the CNS and brain.

The protein resides in the membrane. An essential gene required for embryogenesis; required for cell viability. The protein is Protein EFR3 homolog cmp44E (stmA) of Drosophila melanogaster (Fruit fly).